A 217-amino-acid chain; its full sequence is ATP-dependent Clp protease proteolytic subunit (217 aa).

The active-site Nucleophile is the Ser-121. His-146 is a catalytic residue.

Belongs to the peptidase S14 family. In terms of assembly, fourteen ClpP subunits assemble into 2 heptameric rings which stack back to back to give a disk-like structure with a central cavity, resembling the structure of eukaryotic proteasomes.

The protein localises to the cytoplasm. The enzyme catalyses Hydrolysis of proteins to small peptides in the presence of ATP and magnesium. alpha-casein is the usual test substrate. In the absence of ATP, only oligopeptides shorter than five residues are hydrolyzed (such as succinyl-Leu-Tyr-|-NHMec, and Leu-Tyr-Leu-|-Tyr-Trp, in which cleavage of the -Tyr-|-Leu- and -Tyr-|-Trp bonds also occurs).. Functionally, cleaves peptides in various proteins in a process that requires ATP hydrolysis. Has a chymotrypsin-like activity. Plays a major role in the degradation of misfolded proteins. The polypeptide is ATP-dependent Clp protease proteolytic subunit (Burkholderia mallei (strain NCTC 10247)).